The primary structure comprises 285 residues: Nucleotide-binding protein PSPTO_4456 (285 aa).

8–15 (GRSGSGKS) provides a ligand contact to ATP. 60 to 63 (DARN) provides a ligand contact to GTP.

The protein belongs to the RapZ-like family.

Its function is as follows. Displays ATPase and GTPase activities. This Pseudomonas syringae pv. tomato (strain ATCC BAA-871 / DC3000) protein is Nucleotide-binding protein PSPTO_4456.